The sequence spans 284 residues: D-tagatose-1,6-bisphosphate aldolase subunit GatY (284 aa).

Asp-82 serves as the catalytic Proton donor. His-83 and His-180 together coordinate Zn(2+). Gly-181 contributes to the dihydroxyacetone phosphate binding site. His-208 lines the Zn(2+) pocket. Dihydroxyacetone phosphate is bound by residues 209-211 (GAS) and 230-233 (NVAT).

Belongs to the class II fructose-bisphosphate aldolase family. TagBP aldolase GatY subfamily. In terms of assembly, forms a complex with GatZ. Zn(2+) is required as a cofactor.

It catalyses the reaction D-tagatofuranose 1,6-bisphosphate = D-glyceraldehyde 3-phosphate + dihydroxyacetone phosphate. Its pathway is carbohydrate metabolism; D-tagatose 6-phosphate degradation; D-glyceraldehyde 3-phosphate and glycerone phosphate from D-tagatose 6-phosphate: step 2/2. Catalytic subunit of the tagatose-1,6-bisphosphate aldolase GatYZ, which catalyzes the reversible aldol condensation of dihydroxyacetone phosphate (DHAP or glycerone-phosphate) with glyceraldehyde 3-phosphate (G3P) to produce tagatose 1,6-bisphosphate (TBP). Requires GatZ subunit for full activity and stability. Is involved in the catabolism of galactitol. In Salmonella typhi, this protein is D-tagatose-1,6-bisphosphate aldolase subunit GatY.